The chain runs to 127 residues: Large ribosomal subunit protein bL17 (127 aa).

This sequence belongs to the bacterial ribosomal protein bL17 family. In terms of assembly, part of the 50S ribosomal subunit. Contacts protein L32.

This chain is Large ribosomal subunit protein bL17, found in Mannheimia succiniciproducens (strain KCTC 0769BP / MBEL55E).